The sequence spans 221 residues: MQRRGWFITFEGIDGAGKSSHIEAVAEALRREGRTVTVTREPGGTPLAETLRSLLLNEAMDALTESLVVFAGRRDHLRSVIAPALVRGEVVLCDRFTDATFAYQGAGRGFDRAVLAQLERITQSGLQEGTDAVLHPHLTLWFDLAPDVAAARLEGARAPDRFEAQPVEFFRRVAQGYADRAAADPGRFARLDADQPREAVRAQLMEILHRRGVLDAAQEGG.

12 to 19 (GIDGAGKS) contacts ATP.

The protein belongs to the thymidylate kinase family.

The enzyme catalyses dTMP + ATP = dTDP + ADP. In terms of biological role, phosphorylation of dTMP to form dTDP in both de novo and salvage pathways of dTTP synthesis. This chain is Thymidylate kinase, found in Paracidovorax citrulli (strain AAC00-1) (Acidovorax citrulli).